Consider the following 504-residue polypeptide: MRNWLVLLCPCVLGAALHLWHLWLRSPPDPHNTGPSAADQSALFPHWKFSHYDVVVGVLSARNNHELRNVIRNTWLKNLLHHPTLSQRVLVKFIIGARGCEVPVEDREDPYSCRLLNITNPVLNQEIEAFSFPEDASSSRLSEDRVVSVSFRVLYPIVITSLGVFYDASDVGFQRNITVKLYQTEQEEALFIARFSPPSCGVQVNKLWYKPVEQFILPESFEGTIVWESQDLHGLVSRNLHRVTVNDGGGVLRVLAAGEGALPHEFMEGVEGVAGGFIYTVQEGDALLRSLYSRPQRLADHIQDLQVEDALLQEESSVHDDIVFVDVVDTYRNVPAKLLNFYRWTVESTSFDLLLKTDDDCYIDLEAVFNRIAQKNLDGPNFWWGNFRLNWAVDRTGKWQELEYPSPAYPAFACGSGYVISKDIVDWLAGNSRRLKTYQGEDVSMGIWMAAIGPKRHQDSLWLCEKTCETGMLSSPQYSPEELSKLWELKELCGDPCQCEAKVR.

The Cytoplasmic segment spans residues 1–3 (MRN). Residues 4–24 (WLVLLCPCVLGAALHLWHLWL) traverse the membrane as a helical; Signal-anchor for type II membrane protein segment. Topologically, residues 25-504 (RSPPDPHNTG…DPCQCEAKVR (480 aa)) are lumenal. N117 and N176 each carry an N-linked (GlcNAc...) asparagine glycan.

Belongs to the glycosyltransferase 31 family. In terms of processing, N-glycosylated. In terms of tissue distribution, present in testis (at protein level). In testis, it is mainly detected in the middle layers of seminiferous tubules at stages XII to II. Strongly expressed in primary and secondary spermatocytes and early round spermatids, but not in spermatogonia, elongating or elongated spermatids, or in Leydig or Sertoli cells.

It localises to the golgi apparatus membrane. The protein resides in the endoplasmic reticulum. The catalysed reaction is 3-O-(N-acetyl-beta-D-glucosaminyl-(1-&gt;4)-alpha-D-mannosyl)-L-threonyl-[protein] + UDP-N-acetyl-alpha-D-galactosamine = 3-O-[beta-D-GalNAc-(1-&gt;3)-beta-D-GlcNAc-(1-&gt;4)-alpha-D-Man]-L-Thr-[protein] + UDP + H(+). It functions in the pathway protein modification; protein glycosylation. In terms of biological role, beta-1,3-N-acetylgalactosaminyltransferase that synthesizes a unique carbohydrate structure, GalNAc-beta-1-3GlcNAc, on N- and O-glycans. Has no galactose nor galactosaminyl transferase activity toward any acceptor substrate. Involved in alpha-dystroglycan (DAG1) glycosylation: acts coordinately with GTDC2/POMGnT2 to synthesize a GalNAc-beta3-GlcNAc-beta-terminus at the 4-position of protein O-mannose in the biosynthesis of the phosphorylated O-mannosyl trisaccharide (N-acetylgalactosamine-beta-3-N-acetylglucosamine-beta-4-(phosphate-6-)mannose), a carbohydrate structure present in alpha-dystroglycan, which is required for binding laminin G-like domain-containing extracellular proteins with high affinity. This chain is UDP-GalNAc:beta-1,3-N-acetylgalactosaminyltransferase 2 (B3galnt2), found in Mus musculus (Mouse).